The following is a 356-amino-acid chain: Peptide-N(4)-(N-acetyl-beta-glucosaminyl)asparagine amidase (356 aa).

Residues Cys-129, Cys-132, Cys-163, and Cys-166 each coordinate Zn(2+). The active-site Nucleophile is the Cys-189. Residues His-216 and Asp-233 contribute to the active site. Glu-236 is a binding site for substrate. The interval 300 to 356 (IRQNLSPSEKEELKREDEAEERELASYNADEPQEAQMPRQSGSVEWTKARGEGGSDD) is disordered. 2 stretches are compositionally biased toward basic and acidic residues: residues 307–316 (SEKEELKRED) and 346–356 (TKARGEGGSDD).

The protein belongs to the transglutaminase-like superfamily. PNGase family. It depends on Zn(2+) as a cofactor.

It localises to the cytoplasm. It catalyses the reaction Hydrolysis of an N(4)-(acetyl-beta-D-glucosaminyl)asparagine residue in which the glucosamine residue may be further glycosylated, to yield a (substituted) N-acetyl-beta-D-glucosaminylamine and a peptide containing an aspartate residue.. Specifically deglycosylates the denatured form of N-linked glycoproteins in the cytoplasm and assists their proteasome-mediated degradation. Cleaves the beta-aspartyl-glucosamine (GlcNAc) of the glycan and the amide side chain of Asn, converting Asn to Asp. Prefers proteins containing high-mannose over those bearing complex type oligosaccharides. Can recognize misfolded proteins in the endoplasmic reticulum that are exported to the cytosol to be destroyed and deglycosylate them, while it has no activity toward native proteins. Deglycosylation is a prerequisite for subsequent proteasome-mediated degradation of some, but not all, misfolded glycoproteins. The sequence is that of Peptide-N(4)-(N-acetyl-beta-glucosaminyl)asparagine amidase (PNG1) from Yarrowia lipolytica (strain CLIB 122 / E 150) (Yeast).